Reading from the N-terminus, the 384-residue chain is Mannitol-1-phosphate 5-dehydrogenase (384 aa).

3-14 (ALHFGAGNIGRG) contributes to the NAD(+) binding site.

The protein belongs to the mannitol dehydrogenase family.

The catalysed reaction is D-mannitol 1-phosphate + NAD(+) = beta-D-fructose 6-phosphate + NADH + H(+). The sequence is that of Mannitol-1-phosphate 5-dehydrogenase (mtlD) from Clostridium acetobutylicum (strain ATCC 824 / DSM 792 / JCM 1419 / IAM 19013 / LMG 5710 / NBRC 13948 / NRRL B-527 / VKM B-1787 / 2291 / W).